The following is a 495-amino-acid chain: Trimethylamine methyltransferase MttB1 (495 aa).

Position 334 (Pyl-334) is a non-standard amino acid, pyrrolysine.

It belongs to the trimethylamine methyltransferase family. As to quaternary structure, can form a complex with MttC.

The enzyme catalyses Co(I)-[trimethylamine-specific corrinoid protein] + trimethylamine + H(+) = methyl-Co(III)-[trimethylamine-specific corrinoid protein] + dimethylamine. It functions in the pathway one-carbon metabolism; methanogenesis from trimethylamine. Its function is as follows. Catalyzes the transfer of a methyl group from trimethylamine to the corrinoid cofactor of MttC. In Methanosarcina mazei (strain ATCC BAA-159 / DSM 3647 / Goe1 / Go1 / JCM 11833 / OCM 88) (Methanosarcina frisia), this protein is Trimethylamine methyltransferase MttB1 (mttB1).